Reading from the N-terminus, the 228-residue chain is Probable U3 small nucleolar RNA-associated protein 11 (228 aa).

Disordered stretches follow at residues 1–23 (MSSLRNAIPRPAHKERSQPEARK) and 192–211 (SMQKELQKKGRKRKLRDDEL). The segment covering 12 to 23 (AHKERSQPEARK) has biased composition (basic and acidic residues).

It belongs to the UTP11 family. Component of the ribosomal small subunit (SSU) processome.

The protein localises to the nucleus. Its subcellular location is the nucleolus. Involved in nucleolar processing of pre-18S ribosomal RNA. The polypeptide is Probable U3 small nucleolar RNA-associated protein 11 (Arabidopsis thaliana (Mouse-ear cress)).